We begin with the raw amino-acid sequence, 709 residues long: RxLR effector protein PITG_15110 (709 aa).

A signal peptide spans 1–18 (MHAYSAAVLMGLLMVAEG). The RxLR-dEER signature appears at 51–66 (RLLREPETTEASNEDR).

The protein belongs to the RxLR effector family.

Its subcellular location is the secreted. It is found in the host cytoplasm. The protein resides in the host cytoskeleton. Its function is as follows. Effector that enhances P.infestans colonization of Nicotiana benthamiana leaves. This Phytophthora infestans (strain T30-4) (Potato late blight agent) protein is RxLR effector protein PITG_15110.